Consider the following 965-residue polypeptide: Aminopeptidase N (965 aa).

Over 1 to 8 the chain is Cytoplasmic; that stretch reads MAKGFYIS. The chain crosses the membrane as a helical; Signal-anchor for type II membrane protein span at residues 9 to 32; that stretch reads KALGILAILLGVAAVATIIALSVV. The interval 33 to 65 is cytosolic Ser/Thr-rich junction; sequence YAQEKNKNAERGTAAPTSPTGPTTTSATTLDQS. At 33–965 the chain is on the extracellular side; that stretch reads YAQEKNKNAE…VVLNWFKDHS (933 aa). The interval 40–65 is disordered; that stretch reads NAERGTAAPTSPTGPTTTSATTLDQS. The span at 44-61 shows a compositional bias: low complexity; the sequence is GTAAPTSPTGPTTTSATT. The metalloprotease stretch occupies residues 66–965; sequence KPWNRYRLPT…VVLNWFKDHS (900 aa). A glycan (N-linked (GlcNAc...) asparagine) is linked at Asn125. Tyr173 carries the sulfotyrosine modification. Residues Asn231, Asn260, and Asn316 are each glycosylated (N-linked (GlcNAc...) asparagine). A substrate-binding site is contributed by 349 to 353; sequence GAMEN. His385 is a binding site for Zn(2+). The active-site Proton acceptor is Glu386. Zn(2+)-binding residues include His389 and Glu408. Tyr416 bears the Sulfotyrosine mark. Residues Asn508, Asn569, Asn624, Asn680, Asn734, and Asn738 are each glycosylated (N-linked (GlcNAc...) asparagine). 2 disulfide bridges follow: Cys760-Cys767 and Cys797-Cys833.

This sequence belongs to the peptidase M1 family. In terms of assembly, homodimer. Interacts with SLC6A19. Zn(2+) is required as a cofactor. Post-translationally, sulfated. N- and O-glycosylated. In terms of processing, may undergo proteolysis and give rise to a soluble form.

It localises to the cell membrane. It carries out the reaction Release of an N-terminal amino acid, Xaa-|-Yaa- from a peptide, amide or arylamide. Xaa is preferably Ala, but may be most amino acids including Pro (slow action). When a terminal hydrophobic residue is followed by a prolyl residue, the two may be released as an intact Xaa-Pro dipeptide.. Its function is as follows. Broad specificity aminopeptidase which plays a role in the final digestion of peptides generated from hydrolysis of proteins by gastric and pancreatic proteases. Also involved in the processing of various peptides including peptide hormones, such as angiotensin III and IV, neuropeptides, and chemokines. May also be involved the cleavage of peptides bound to major histocompatibility complex class II molecules of antigen presenting cells. May have a role in angiogenesis and promote cholesterol crystallization. May have a role in amino acid transport by acting as binding partner of amino acid transporter SLC6A19 and regulating its activity. In Bos taurus (Bovine), this protein is Aminopeptidase N (ANPEP).